The primary structure comprises 430 residues: Tektin-2 (430 aa).

2 coiled-coil regions span residues 75–162 and 226–380; these read KEML…FQHL and KNRA…IACK.

This sequence belongs to the tektin family. As to quaternary structure, microtubule inner protein component of sperm flagellar doublet microtubules. May interact with CCDC172. Post-translationally, tyrosine phosphorylated. In terms of processing, ubiquitinated, leading to its degradation. Deubiquitinated by USP16, promoting its stability.

It localises to the cytoplasm. The protein resides in the cytoskeleton. The protein localises to the cilium axoneme. Its subcellular location is the flagellum axoneme. It is found in the microtubule organizing center. Functionally, microtubule inner protein (MIP) part of the dynein-decorated doublet microtubules (DMTs) in cilia and flagellar axoneme. Plays a key role in the assembly or attachment of the inner dynein arm to microtubules in sperm flagella and tracheal cilia. Forms filamentous polymers in the walls of ciliary and flagellar microtubules. The polypeptide is Tektin-2 (Tekt2) (Rattus norvegicus (Rat)).